Consider the following 459-residue polypeptide: Ribulose bisphosphate carboxylase (459 aa).

Asparagine 111 serves as a coordination point for substrate. Lysine 166 (proton acceptor) is an active-site residue. A substrate-binding site is contributed by lysine 168. Residues lysine 191, aspartate 193, and glutamate 194 each contribute to the Mg(2+) site. Lysine 191 carries the post-translational modification N6-carboxylysine. The active-site Proton acceptor is the histidine 287. Substrate is bound by residues arginine 288, histidine 321, and serine 368.

This sequence belongs to the RuBisCO large chain family. Type II subfamily. Homodimer. Mg(2+) serves as cofactor.

The catalysed reaction is 2 (2R)-3-phosphoglycerate + 2 H(+) = D-ribulose 1,5-bisphosphate + CO2 + H2O. It catalyses the reaction D-ribulose 1,5-bisphosphate + O2 = 2-phosphoglycolate + (2R)-3-phosphoglycerate + 2 H(+). Functionally, ruBisCO catalyzes two reactions: the carboxylation of D-ribulose 1,5-bisphosphate, the primary event in carbon dioxide fixation, as well as the oxidative fragmentation of the pentose substrate. Both reactions occur simultaneously and in competition at the same active site. This chain is Ribulose bisphosphate carboxylase, found in Polaromonas naphthalenivorans (strain CJ2).